The following is a 246-amino-acid chain: D-erythrulose reductase (246 aa).

An NADP(+)-binding site is contributed by Leu13 to Arg41. Ser138 is a substrate binding site. Catalysis depends on Tyr151, which acts as the Proton acceptor. Position 155 (Lys155) interacts with NADP(+).

It belongs to the short-chain dehydrogenases/reductases (SDR) family. In terms of assembly, homotetramer. In terms of processing, the N-terminus is blocked. In terms of tissue distribution, highly expressed in kidney, and also found in high amounts in liver and testis. Low expression seen in all other tissues tested.

Its subcellular location is the cytoplasm. The catalysed reaction is D-threitol + NADP(+) = D-erythrulose + NADPH + H(+). The enzyme catalyses xylitol + NADP(+) = L-xylulose + NADPH + H(+). In terms of biological role, catalyzes the reduction of D-erythrulose to D-threitol with the concomitant oxidation of NAD(P)H to NAD(P)(+). NADH is less effective than NADPH. May also catalyze the reduction of L-xylulose. This chain is D-erythrulose reductase (DER), found in Gallus gallus (Chicken).